Reading from the N-terminus, the 231-residue chain is uncharacterized protein (231 aa).

The next 4 helical transmembrane spans lie at 39 to 59 (FCISVISFFLLAIITLTYGPF), 70 to 90 (ALSLYFINVIMGVTYLSVPVI), 156 to 176 (AIISILCLSYSAICIVNGGSI), and 189 to 206 (IVAIMFFILYTSLMNMFF).

It belongs to the FliR/MopE/SpaR family.

The protein localises to the cell membrane. This is an uncharacterized protein from Escherichia coli (strain K12).